Reading from the N-terminus, the 105-residue chain is Cuticle protein AMP1B (105 aa).

The segment at Asp1–Tyr21 is disordered. Residues Asp16–Pro81 enclose the Chitin-binding type R&amp;R domain.

As to expression, arthrodial membrane.

The protein is Cuticle protein AMP1B of Homarus americanus (American lobster).